A 255-amino-acid polypeptide reads, in one-letter code: MNMNQTTSPALSQVETAIRVPAGIFAKYNYYSVFDIVRQTRKQFINANMSWPGSRGGKTWDLAMGQAQYIRCMFRENQLTRRVRGTLQQTPDNGTNLSSSAVGGIQGQAERRPDLATLMVVNDAINQQIPTLLPTHFPHDQVELSLLNTDVSLEDIISESSIDWPWFLSNSLTGDNSNYAMELASRLSPEQQTLPTEPDNSTATDLTSFYQTNLGLKTADYTPFEALNTFARQLAITVPPGGTVDCGYSACQPAV.

It belongs to the SpvA family.

Not known. This protein is involved in the virulence of salmonellas. The polypeptide is 28.1 kDa virulence protein (mkaB) (Salmonella typhimurium).